Consider the following 601-residue polypeptide: Elongation factor 4 (601 aa).

Residues 6 to 188 (SHIRNFSIIA…QIVHRVPAPE (183 aa)) form the tr-type G domain. GTP-binding positions include 18–23 (DHGKST) and 135–138 (NKID).

Belongs to the TRAFAC class translation factor GTPase superfamily. Classic translation factor GTPase family. LepA subfamily.

The protein resides in the cell inner membrane. It carries out the reaction GTP + H2O = GDP + phosphate + H(+). Its function is as follows. Required for accurate and efficient protein synthesis under certain stress conditions. May act as a fidelity factor of the translation reaction, by catalyzing a one-codon backward translocation of tRNAs on improperly translocated ribosomes. Back-translocation proceeds from a post-translocation (POST) complex to a pre-translocation (PRE) complex, thus giving elongation factor G a second chance to translocate the tRNAs correctly. Binds to ribosomes in a GTP-dependent manner. The polypeptide is Elongation factor 4 (Anaeromyxobacter dehalogenans (strain 2CP-1 / ATCC BAA-258)).